Reading from the N-terminus, the 397-residue chain is Tryptophan synthase beta chain (397 aa).

Lysine 87 is modified (N6-(pyridoxal phosphate)lysine).

It belongs to the TrpB family. In terms of assembly, tetramer of two alpha and two beta chains. Pyridoxal 5'-phosphate is required as a cofactor.

The enzyme catalyses (1S,2R)-1-C-(indol-3-yl)glycerol 3-phosphate + L-serine = D-glyceraldehyde 3-phosphate + L-tryptophan + H2O. It functions in the pathway amino-acid biosynthesis; L-tryptophan biosynthesis; L-tryptophan from chorismate: step 5/5. The beta subunit is responsible for the synthesis of L-tryptophan from indole and L-serine. The protein is Tryptophan synthase beta chain of Enterobacter sp. (strain 638).